Consider the following 399-residue polypeptide: Lipoyl synthase, mitochondrial (399 aa).

Residues 1–30 (MRAVLELTRRRARNARFARARAVVGARARA) constitute a mitochondrion transit peptide. The span at 31-41 (ADAQELRDDSK) shows a compositional bias: basic and acidic residues. Residues 31 to 58 (ADAQELRDDSKGGSSVDKATSTAAEARE) are disordered. Cysteine 131, cysteine 136, cysteine 142, cysteine 162, cysteine 166, cysteine 169, and serine 375 together coordinate [4Fe-4S] cluster. The Radical SAM core domain maps to 145 to 364 (GGDGKTATAT…QEIAEEMGFL (220 aa)).

Belongs to the radical SAM superfamily. Lipoyl synthase family. Requires [4Fe-4S] cluster as cofactor.

It is found in the mitochondrion. The enzyme catalyses [[Fe-S] cluster scaffold protein carrying a second [4Fe-4S](2+) cluster] + N(6)-octanoyl-L-lysyl-[protein] + 2 oxidized [2Fe-2S]-[ferredoxin] + 2 S-adenosyl-L-methionine + 4 H(+) = [[Fe-S] cluster scaffold protein] + N(6)-[(R)-dihydrolipoyl]-L-lysyl-[protein] + 4 Fe(3+) + 2 hydrogen sulfide + 2 5'-deoxyadenosine + 2 L-methionine + 2 reduced [2Fe-2S]-[ferredoxin]. It functions in the pathway protein modification; protein lipoylation via endogenous pathway; protein N(6)-(lipoyl)lysine from octanoyl-[acyl-carrier-protein]: step 2/2. Its function is as follows. Catalyzes the radical-mediated insertion of two sulfur atoms into the C-6 and C-8 positions of the octanoyl moiety bound to the lipoyl domains of lipoate-dependent enzymes, thereby converting the octanoylated domains into lipoylated derivatives. The polypeptide is Lipoyl synthase, mitochondrial (Ostreococcus lucimarinus (strain CCE9901)).